The following is a 220-amino-acid chain: GTP-binding nuclear protein GSP2/CNR2 (220 aa).

At Ser2 the chain carries N-acetylserine. Ser2 carries the post-translational modification Phosphoserine. Positions 10–174 (EVPTFKLVLV…LWLARKLAGN (165 aa)) constitute a Small GTPase Ran-type domain. 21-28 (DGGTGKTT) provides a ligand contact to GTP. The tract at residues 40–48 (KKYIATIGV) is switch-I. GTP is bound by residues Gly71, 125–128 (NKVD), and 153–155 (SAK). Residues 71 to 87 (GQEKFGGLRDGYYINAQ) are switch-II.

Belongs to the small GTPase superfamily. Ran family. Found in a nuclear export complex with RanGTP, exportin and pre-miRNA.

The protein resides in the nucleus. In terms of biological role, GTP-binding protein involved in nucleocytoplasmic transport. Required for the import of protein into the nucleus and also for RNA export. Not essential for cell viability. This Saccharomyces cerevisiae (strain ATCC 204508 / S288c) (Baker's yeast) protein is GTP-binding nuclear protein GSP2/CNR2 (GSP2).